The following is a 290-amino-acid chain: Short-chain dehydrogenase srdE (290 aa).

NADP(+) is bound by residues I11, T37, D58, and N86. A helical membrane pass occupies residues 125 to 145; sequence LIASSGIIVNIGSIGGVVPFV. Y150 provides a ligand contact to NADP(+). Y150 acts as the Proton donor in catalysis. The N-linked (GlcNAc...) asparagine glycan is linked to N151. Residues K154, V183, and T185 each contribute to the NADP(+) site. The active-site Lowers pKa of active site Tyr is K154.

Belongs to the short-chain dehydrogenases/reductases (SDR) family.

It is found in the membrane. In terms of biological role, short-chain dehydrogenase; part of the gene cluster that mediates the biosynthesis of sordarial, a salicylic aldehyde structurally related to the phytotoxin pyriculol. The most interesting aspect of this pathway is formation of an aromatic product from the highly reducing polyketide synthase srdA. SrdA synthesizes a reduced polyketide chain from one molecule of acetyl-CoA and five molecules of malonyl-CoA. The polyketide chain is then reductively released as an aldehyde. The oxidoreductases srdC, srdD and srdE then oxidize one of the hydroxy groups to facilitate the intramolecular aldol condensation, followed by dehydration to yield a salicylic aldehyde. This aldehyde can undergo facile reduction by endogenous reductases to yield the alcohol 1-hydroxy-2-hydroxymethyl-3-pent-1,3-dienylbenzene. The flavin-dependent srdI counteract against the propensity of the aldehydes to be reduced under physiological conditions and is responsible for reoxidizing 1-hydroxy-2-hydroxymethyl-3-pent-1,3-dienylbenzene back to the salicylic aldehyde. This salicylic aldehyde is then selectively epoxidized by the cupin-domain-containing oxidoreductase srdB to yield the epoxide, which can be hydrolyzed stereoselectively by the hydrolase srdG to give the final product sordarial. The sequence is that of Short-chain dehydrogenase srdE from Neurospora crassa (strain ATCC 24698 / 74-OR23-1A / CBS 708.71 / DSM 1257 / FGSC 987).